The primary structure comprises 102 residues: uncharacterized protein (102 aa).

This is an uncharacterized protein from Bacillus subtilis (strain 168).